A 154-amino-acid polypeptide reads, in one-letter code: MPSRTVRYARYSPRQRRRRMLADRSVRFPNDVLFLDHIRQGDLEQVGRFIRARKVSLDTIHPSGLAALHEAVLSGNLECVKLLVKYGADIHQRDETGWTPLHIACSDGYPDIARYLISLGADRDAANDDGDLPSDLIDPDFKDLVELFKGTSMD.

ANK repeat units lie at residues 63–92 (SGLA…DIHQ) and 96–125 (TGWT…DRDA).

Interacts with DYSF and PPP1CA.

Functionally, inhibits phosphatase activity of protein phosphatase 1 (PP1) complexes. This Mus musculus (Mouse) protein is Protein phosphatase 1 regulatory subunit 27 (Ppp1r27).